The primary structure comprises 533 residues: Chromosomal replication initiator protein DnaA (533 aa).

A domain I, interacts with DnaA modulators region spans residues 1–72 (MNDFWQHCSA…DLARDFWNAP (72 aa)). The interval 72–196 (PIEVQFVLDP…EAADSMYERS (125 aa)) is domain II. The disordered stretch occupies residues 83–110 (AGQRSPAGATPLAPRAPLPSANPAPVGP). Over residues 96–110 (PRAPLPSANPAPVGP) the composition is skewed to pro residues. The tract at residues 197 to 413 (KLNPVLTFDN…GALRKILAYS (217 aa)) is domain III, AAA+ region. ATP-binding residues include Gly241, Gly243, Lys244, and Thr245. Residues 414 to 533 (KFHGREITIE…LHVLEQTLKG (120 aa)) are domain IV, binds dsDNA.

The protein belongs to the DnaA family. In terms of assembly, oligomerizes as a right-handed, spiral filament on DNA at oriC.

Its subcellular location is the cytoplasm. Plays an essential role in the initiation and regulation of chromosomal replication. ATP-DnaA binds to the origin of replication (oriC) to initiate formation of the DNA replication initiation complex once per cell cycle. Binds the DnaA box (a 9 base pair repeat at the origin) and separates the double-stranded (ds)DNA. Forms a right-handed helical filament on oriC DNA; dsDNA binds to the exterior of the filament while single-stranded (ss)DNA is stabiized in the filament's interior. The ATP-DnaA-oriC complex binds and stabilizes one strand of the AT-rich DNA unwinding element (DUE), permitting loading of DNA polymerase. After initiation quickly degrades to an ADP-DnaA complex that is not apt for DNA replication. Binds acidic phospholipids. This chain is Chromosomal replication initiator protein DnaA, found in Burkholderia mallei (strain NCTC 10247).